A 127-amino-acid polypeptide reads, in one-letter code: Anti-adapter protein IraD (127 aa).

This sequence belongs to the GpW/Gp25 family. IraD subfamily. Interacts with RssB.

Its subcellular location is the cytoplasm. In terms of biological role, inhibits RpoS proteolysis by regulating RssB activity, thereby increasing the stability of the sigma stress factor RpoS during oxidative stress. Its effect on RpoS stability is due to its interaction with RssB, which probably blocks the interaction of RssB with RpoS, and the consequent delivery of the RssB-RpoS complex to the ClpXP protein degradation pathway. In Escherichia coli (strain SMS-3-5 / SECEC), this protein is Anti-adapter protein IraD.